A 206-amino-acid polypeptide reads, in one-letter code: Bis(5'-adenosyl)-triphosphatase (206 aa).

Positions 3–115 constitute an HIT domain; that stretch reads KPIYFSKFLV…KINNVGDLIY (113 aa). The Histidine triad motif signature appears at 96 to 100; it reads HLHTH. Histidine 98 acts as the Tele-AMP-histidine intermediate in catalysis. Positions 143–164 are disordered; it reads RQARKNNSTSATVDGDELSQGP.

Homodimer. Requires Mn(2+) as cofactor.

The protein resides in the cytoplasm. It localises to the nucleus. The protein localises to the mitochondrion. The enzyme catalyses P(1),P(3)-bis(5'-adenosyl) triphosphate + H2O = AMP + ADP + 2 H(+). In terms of biological role, cleaves A-5'-PPP-5'A to yield AMP and ADP. Can cleave all dinucleoside polyphosphates, provided the phosphate chain contains at least 3 phosphates and that 1 of the 2 bases composing the nucleotide is a purine. Is most effective on dinucleoside triphosphates. Negatively regulates intracellular dinucleoside polyphosphate levels, which elevate following heat shock. The chain is Bis(5'-adenosyl)-triphosphatase (HNT2) from Saccharomyces cerevisiae (strain RM11-1a) (Baker's yeast).